We begin with the raw amino-acid sequence, 122 residues long: Large ribosomal subunit protein bL12 (122 aa).

The protein belongs to the bacterial ribosomal protein bL12 family. In terms of assembly, homodimer. Part of the ribosomal stalk of the 50S ribosomal subunit. Forms a multimeric L10(L12)X complex, where L10 forms an elongated spine to which 2 to 4 L12 dimers bind in a sequential fashion. Binds GTP-bound translation factors.

In terms of biological role, forms part of the ribosomal stalk which helps the ribosome interact with GTP-bound translation factors. Is thus essential for accurate translation. This is Large ribosomal subunit protein bL12 from Acinetobacter baumannii (strain AB0057).